We begin with the raw amino-acid sequence, 226 residues long: Teichuronic acid biosynthesis protein TuaF (226 aa).

The next 2 membrane-spanning stretches (helical) occupy residues 15–35 and 202–222; these read NIIW…ILPS and VLGV…PEFF.

Its subcellular location is the cell membrane. The protein operates within cell wall biogenesis; teichuronic acid biosynthesis. This chain is Teichuronic acid biosynthesis protein TuaF (tuaF), found in Bacillus subtilis (strain 168).